Reading from the N-terminus, the 47-residue chain is Delta-actitoxin-Axm1e (47 aa).

3 disulfides stabilise this stretch: Cys-4–Cys-44, Cys-6–Cys-34, and Cys-27–Cys-45.

Belongs to the sea anemone sodium channel inhibitory toxin family. Type I subfamily.

The protein resides in the secreted. It is found in the nematocyst. In terms of biological role, binds specifically to voltage-gated sodium channels (Nav), thereby delaying their inactivation. This toxin is active on a variety of voltage-gated sodium channels (Nav1.1/SCN1A, Nav1.2/SCN2A, Nav1.3/SCN3A, Nav1.4/SCN4A, Nav1.5/SCN5A and Nav1.6/SCN8A). This Anthopleura xanthogrammica (Giant green sea anemone) protein is Delta-actitoxin-Axm1e.